A 931-amino-acid chain; its full sequence is Myocardin-related transcription factor A (931 aa).

The segment at Met1 to Asp256 is mediates interaction with SCAI and ACTB. Residue Ser6 is modified to Phosphoserine. The interval Ser6–Glu23 is intervening spacer sequence 1. The stretch at Asp24–Ser49 is one RPEL 1 repeat. Positions Lys27–Arg65 match the Bipartite Nuclear localization signal motif. An intervening spacer sequence 2 region spans residues Ala50–Ala67. Residues Asp68–Ser93 form an RPEL 2 repeat. 2 disordered regions span residues Ala110–Asp256 and Pro290–Pro344. Ser124, Ser139, and Ser156 each carry phosphoserine. The span at Ser151–Ser162 shows a compositional bias: polar residues. A compositionally biased stretch (pro residues) spans Pro180–Pro189. A compositionally biased stretch (polar residues) spans Ser191–Ser215. Positions Ala216 to Pro231 are enriched in basic and acidic residues. Thr305 carries the phosphothreonine modification. Phosphoserine occurs at positions 310 and 312. Over residues Ser310–Ser320 the composition is skewed to low complexity. At Thr313 the chain carries Phosphothreonine. Ser317, Ser320, and Ser333 each carry phosphoserine. The SAP domain occupies Leu347 to Gln381. A phosphoserine mark is found at Ser385 and Ser446. The disordered stretch occupies residues Phe444–Phe476. Residue Thr447 is modified to Phosphothreonine. At Ser449 the chain carries Phosphoserine. Position 450 is a phosphothreonine (Thr450). Ser454 bears the Phosphoserine mark. A Phosphothreonine modification is found at Thr456. A Phosphoserine modification is found at Ser458. The span at Glu459–Gly473 shows a compositional bias: polar residues. 4 positions are modified to phosphoserine: Ser482, Ser492, Ser507, and Ser511. A coiled-coil region spans residues Arg515–Gln563. Disordered stretches follow at residues Glu558–Gln577, Lys674–Gln746, and Ala763–Asp816. The segment covering Ser678–Gly694 has biased composition (low complexity). Residues Ser685, Ser691, and Ser695 each carry the phosphoserine modification. The segment covering Met732–Gln746 has biased composition (polar residues). Residues Ala763–Ser778 show a composition bias toward basic and acidic residues. Residues Gly784 to Gln799 are compositionally biased toward low complexity. Phosphoserine is present on residues Ser792, Ser807, and Ser859.

In terms of assembly, interacts with SRF, forming the SRF-MRTFA nuclear complex which binds the 5'-CArG-3' consensus motif (CArG box) on DNA via SRF. Interacts (via RPEL repeats) with globular actin (G-actin), thereby regulating its subcellular location and activity of the complex formed with SRF. Either forms a trivalent (by binding three G-actin monomers) or pentavalent (by binding five G-actin monomers) complex with G-actin. Forms a nuclear ternary complex with SCAI and SRF, leading to suppress MRTFA-induced SRF transcriptional activity. Interacts with beta-actin (ACTB); interaction with ACTB prevents interaction with SCAI. Interacts with MRTFB. Phosphorylation at Ser-6 by Erk inhibits binding of globular actin (G-actin), unmasking the nuclear localization signal (NLS) and promoting nuclear import. In terms of tissue distribution, ubiquitously expressed, has been detected in lung, placenta, small intestine, liver, kidney, spleen, thymus, colon, muscle, heart and brain. Expressed in peripheral blood mononuclear cells (at protein level).

It localises to the cytoplasm. The protein localises to the nucleus. Its function is as follows. Transcription coactivator that associates with the serum response factor (SRF) transcription factor to control expression of genes regulating the cytoskeleton during development, morphogenesis and cell migration. The SRF-MRTFA complex activity responds to Rho GTPase-induced changes in cellular globular actin (G-actin) concentration, thereby coupling cytoskeletal gene expression to cytoskeletal dynamics. MRTFA binds G-actin via its RPEL repeats, regulating activity of the MRTFA-SRF complex. Activity is also regulated by filamentous actin (F-actin) in the nucleus. The polypeptide is Myocardin-related transcription factor A (Homo sapiens (Human)).